Consider the following 95-residue polypeptide: MKKYEIMYILRPNLDSKDVKKINDTLQNVFLQAPNQILEQNEIGLKDLAYLIDNHKKGYYNWLMVKADNDAVLEFNRIVKITEEIIRFIFIKDKE.

This sequence belongs to the bacterial ribosomal protein bS6 family.

Its function is as follows. Binds together with bS18 to 16S ribosomal RNA. The chain is Small ribosomal subunit protein bS6 from Onion yellows phytoplasma (strain OY-M).